Here is a 98-residue protein sequence, read N- to C-terminus: TTCTTTQQTAAYVALVSILSDSSFNQCATDSGYSMLTATALPTTAQYKLMCASTACKTMITKIVSLNAPDCELTVPTSGLVLNVYSYANGFSSTCASL.

3 disulfide bridges follow: C3-C71, C27-C56, and C51-C95.

The protein resides in the secreted. Induces local and distal defense responses (incompatible hypersensitive reaction) in plants from the solanaceae and cruciferae families. Elicits leaf necrosis and causes the accumulation of pathogenesis-related proteins. Might interact with the lipidic molecules of the plasma membrane. This Phytophthora hibernalis protein is Alpha-elicitin hibernalin.